An 82-amino-acid chain; its full sequence is Myosin light chain alkali (82 aa).

The EF-hand domain maps to 7–42; that stretch reads GCYEDFIECLKLYDKEENGTMMLAELQHALLALGES.

In terms of assembly, myosin is a hexamer of 2 heavy chains and 4 light chains.

This is Myosin light chain alkali (Mlc1) from Drosophila mauritiana (Fruit fly).